Reading from the N-terminus, the 235-residue chain is Small ribosomal subunit protein uS3 (235 aa).

The KH type-2 domain occupies 39–107 (IREILHKELK…DVVINIVEIR (69 aa)). Positions 215–235 (QDKRMAESDGGGSSRPRRDAA) are disordered.

The protein belongs to the universal ribosomal protein uS3 family. Part of the 30S ribosomal subunit. Forms a tight complex with proteins S10 and S14.

Its function is as follows. Binds the lower part of the 30S subunit head. Binds mRNA in the 70S ribosome, positioning it for translation. This Rhodopseudomonas palustris (strain TIE-1) protein is Small ribosomal subunit protein uS3.